A 79-amino-acid polypeptide reads, in one-letter code: Ferredoxin oxidoreductase 1 subunit ForD (79 aa).

4Fe-4S ferredoxin-type domains are found at residues tyrosine 3–glutamate 35 and histidine 37–isoleucine 65. [4Fe-4S] cluster-binding residues include cysteine 12, cysteine 17, cysteine 20, cysteine 24, cysteine 46, cysteine 49, cysteine 52, and cysteine 56.

In terms of assembly, heterotetramer of one alpha, one beta, one delta and one gamma chain. [4Fe-4S] cluster serves as cofactor.

The sequence is that of Ferredoxin oxidoreductase 1 subunit ForD (forD1) from Aquifex aeolicus (strain VF5).